The primary structure comprises 105 residues: Protein ORFg in retron Ec67 (105 aa).

This Escherichia coli protein is Protein ORFg in retron Ec67.